Reading from the N-terminus, the 383-residue chain is Insecticidal crystal protein Cry35Ab1 (383 aa).

The region spanning 26–138 is the Ricin B-type lectin domain; that stretch reads DDSGVSLMNK…NNPNQQWNLT (113 aa).

Belongs to the toxin_10 family. In terms of assembly, monomer in solution. Copurifies from parasporal inclusion bodies with Cry34Ab1. In terms of processing, proteolytic processing occurs near the C-terminus yielding a stable protein of approximately 40 kDa; this may be the active form of the protein.

Functionally, component of a binary insecticidal toxin active on western corn rootworm (WCR, Diabrotica virgifera subsp. virgifera Le Conte) and probably also on northern corn rootworm (D.barberi). Both proteins are required for maximal toxicity. The larval midgut epithelium is probably the primary target. This protein alone has no activity against southern corn rootworm (Diabrotica undecimpunctata howardi Barber), but it synergizes the toxic effect of its Cry34Ab1 partner. The 2 proteins individually and together form ion channels; channels made in the presence of the 2 proteins have higher conductance. Binds to WCR third instar midgut brush border membrane vesicles; binding improves over 10-fold in the presence of Cry34Ab1. The chain is Insecticidal crystal protein Cry35Ab1 from Bacillus thuringiensis.